Reading from the N-terminus, the 276-residue chain is Cis-2,3-dihydrobiphenyl-2,3-diol dehydrogenase (276 aa).

9-33 (LVTGGGSGLGRAIVDRFVAEGARVA) is an NAD(+) binding site. Serine 142 serves as a coordination point for substrate. The active-site Proton acceptor is tyrosine 155.

It belongs to the short-chain dehydrogenases/reductases (SDR) family.

The catalysed reaction is (2R,3S)-3-phenylcyclohexa-3,5-diene-1,2-diol + NAD(+) = biphenyl-2,3-diol + NADH + H(+). Its pathway is xenobiotic degradation; biphenyl degradation; 2-hydroxy-2,4-pentadienoate and benzoate from biphenyl: step 2/4. In Pseudomonas sp. (strain KKS102), this protein is Cis-2,3-dihydrobiphenyl-2,3-diol dehydrogenase (bphB).